The primary structure comprises 391 residues: Formate-dependent phosphoribosylglycinamide formyltransferase (391 aa).

N(1)-(5-phospho-beta-D-ribosyl)glycinamide contacts are provided by residues 20 to 21 (EL) and Glu80. Residues Arg112, Lys153, 158–163 (SSGKGQ), 193–196 (EGFI), and Glu201 each bind ATP. Positions 117 to 306 (RLAAEELDLS…EFALHVRAFT (190 aa)) constitute an ATP-grasp domain. 2 residues coordinate Mg(2+): Glu265 and Glu277. Residues Asp284, Lys354, and 361–362 (RR) each bind N(1)-(5-phospho-beta-D-ribosyl)glycinamide.

This sequence belongs to the PurK/PurT family. In terms of assembly, homodimer.

The enzyme catalyses N(1)-(5-phospho-beta-D-ribosyl)glycinamide + formate + ATP = N(2)-formyl-N(1)-(5-phospho-beta-D-ribosyl)glycinamide + ADP + phosphate + H(+). Its pathway is purine metabolism; IMP biosynthesis via de novo pathway; N(2)-formyl-N(1)-(5-phospho-D-ribosyl)glycinamide from N(1)-(5-phospho-D-ribosyl)glycinamide (formate route): step 1/1. Involved in the de novo purine biosynthesis. Catalyzes the transfer of formate to 5-phospho-ribosyl-glycinamide (GAR), producing 5-phospho-ribosyl-N-formylglycinamide (FGAR). Formate is provided by PurU via hydrolysis of 10-formyl-tetrahydrofolate. This chain is Formate-dependent phosphoribosylglycinamide formyltransferase, found in Vibrio parahaemolyticus serotype O3:K6 (strain RIMD 2210633).